A 27-amino-acid chain; its full sequence is Caerulein precursor fragment R4 (27 aa).

Expressed by the skin glands.

It localises to the secreted. In terms of biological role, antimicrobial peptide. This chain is Caerulein precursor fragment R4, found in Xenopus ruwenzoriensis (Uganda clawed frog).